The following is a 316-amino-acid chain: uncharacterized protein (316 aa).

BNR repeat units lie at residues 62-73 (FISDSQGLKFSP), 124-135 (KISVDNGLTWSN), 196-207 (FISRDGGLTWRV), and 242-253 (YFSLDQGRTWNQ).

This is an uncharacterized protein from Saccharomyces cerevisiae (strain ATCC 204508 / S288c) (Baker's yeast).